We begin with the raw amino-acid sequence, 300 residues long: MEIPMGTQGCFSKSLLLSASILVLWMLQGSQAALYIQKIPEQPQKNQDLLLSVQGVPDTFQDFNWYLGEETYGGTRLFTYIPGIQRPQRDGSAMGQRDIVGFPNGSMLLRRAQPTDSGTYQVAITINSEWTMKAKTEVQVAEKNKELPSTHLPTNAGILAATIIGSLAAGALLISCIAYLLVTRNWRGQSHRLPAPRGQGSLSILCSAVSPVPSVTPSTWMATTEKPELGPAHDAGDNNIYEVMPSPVLLVSPISDTRSINPARPLPTPPHLQAEPENHQYQQDLLNPDPAPYCQLVPTS.

An N-terminal signal peptide occupies residues M1–A32. Residues A33–G157 lie on the Extracellular side of the membrane. A glycan (N-linked (GlcNAc...) asparagine) is linked at N104. The helical transmembrane segment at I158 to A178 threads the bilayer. Residues Y179–S300 lie on the Cytoplasmic side of the membrane. The interval S259–A291 is disordered.

Belongs to the immunoglobulin superfamily. CEA family. As to expression, ubiquitous with highest expression in prostate, uterus, fetal brain, mammary gland, adrenal gland, skeletal muscle, small intestine, and kidney, and lower expression in lung, cerebellum, testis, liver, pancreas, bone marrow and ovary.

It is found in the membrane. The sequence is that of Cell adhesion molecule CEACAM19 from Homo sapiens (Human).